Reading from the N-terminus, the 237-residue chain is Probable transcriptional regulatory protein Fjoh_2560 (237 aa).

This sequence belongs to the TACO1 family.

It localises to the cytoplasm. The chain is Probable transcriptional regulatory protein Fjoh_2560 from Flavobacterium johnsoniae (strain ATCC 17061 / DSM 2064 / JCM 8514 / BCRC 14874 / CCUG 350202 / NBRC 14942 / NCIMB 11054 / UW101) (Cytophaga johnsonae).